Consider the following 256-residue polypeptide: Ubiquinone/menaquinone biosynthesis C-methyltransferase UbiE (256 aa).

Residues threonine 79, aspartate 100, and aspartate 128 to alanine 129 contribute to the S-adenosyl-L-methionine site.

The protein belongs to the class I-like SAM-binding methyltransferase superfamily. MenG/UbiE family.

It carries out the reaction a 2-demethylmenaquinol + S-adenosyl-L-methionine = a menaquinol + S-adenosyl-L-homocysteine + H(+). The enzyme catalyses a 2-methoxy-6-(all-trans-polyprenyl)benzene-1,4-diol + S-adenosyl-L-methionine = a 5-methoxy-2-methyl-3-(all-trans-polyprenyl)benzene-1,4-diol + S-adenosyl-L-homocysteine + H(+). The protein operates within quinol/quinone metabolism; menaquinone biosynthesis; menaquinol from 1,4-dihydroxy-2-naphthoate: step 2/2. It participates in cofactor biosynthesis; ubiquinone biosynthesis. Functionally, methyltransferase required for the conversion of demethylmenaquinol (DMKH2) to menaquinol (MKH2) and the conversion of 2-polyprenyl-6-methoxy-1,4-benzoquinol (DDMQH2) to 2-polyprenyl-3-methyl-6-methoxy-1,4-benzoquinol (DMQH2). This chain is Ubiquinone/menaquinone biosynthesis C-methyltransferase UbiE, found in Pseudomonas syringae pv. tomato (strain ATCC BAA-871 / DC3000).